Reading from the N-terminus, the 748-residue chain is SNF-related serine/threonine-protein kinase (748 aa).

Residues 16-269 form the Protein kinase domain; sequence YDLDKTLGRG…LEEIESHPWL (254 aa). Residues 22-30 and Lys-45 contribute to the ATP site; that span reads LGRGHFAVV. Asp-139 functions as the Proton acceptor in the catalytic mechanism. Ser-162 carries the post-translational modification Phosphoserine. Thr-173 is subject to Phosphothreonine; by LKB1. The UBA domain maps to 291–334; that stretch reads SEEEHNSIIQRMVLGDIADRDAIVEALETNRYNHITATYFLLAE. 5 positions are modified to phosphoserine: Ser-362, Ser-390, Ser-482, Ser-495, and Ser-518. Residues 383 to 415 are disordered; that stretch reads SHATVPQSPARAGDNVLNGHRSKGLCDPAKKDE. Residues 491 to 503 are compositionally biased toward acidic residues; it reads EEGESDDEFDMDE. The tract at residues 491 to 640 is disordered; sequence EEGESDDEFD…SPSPASASAA (150 aa). The segment covering 522–532 has biased composition (basic residues); the sequence is VHKRYHRRKSQ. Positions 533 to 542 are enriched in low complexity; that stretch reads GRGSSCSSSE. Arg-534 carries the post-translational modification Omega-N-methylarginine. Residues 549 to 558 show a composition bias toward basic and acidic residues; that stretch reads ESRRRLDKDS. 2 stretches are compositionally biased toward gly residues: residues 575–592 and 600–614; these read GSEG…GGGV and QGTG…GGTP. Ser-606 is subject to Phosphoserine. The segment covering 629–640 has biased composition (low complexity); that stretch reads SSSPSPASASAA.

It belongs to the protein kinase superfamily. CAMK Ser/Thr protein kinase family. Mg(2+) is required as a cofactor. In terms of processing, autophosphorylated. Phosphorylation on Thr-173 by STK11/LKB1 in complex with STE20-related adapter-alpha (STRADA) pseudo kinase and CAB39. Ubiquitously expressed in all tissues examined.

It localises to the nucleus. It carries out the reaction L-seryl-[protein] + ATP = O-phospho-L-seryl-[protein] + ADP + H(+). The catalysed reaction is L-threonyl-[protein] + ATP = O-phospho-L-threonyl-[protein] + ADP + H(+). Its activity is regulated as follows. Activated by phosphorylation on Thr-173. May play a role in hematopoietic cell proliferation or differentiation. Potential mediator of neuronal apoptosis. The sequence is that of SNF-related serine/threonine-protein kinase from Mus musculus (Mouse).